The chain runs to 264 residues: Regulatory protein RecX (264 aa).

The protein belongs to the RecX family.

Its subcellular location is the cytoplasm. Modulates RecA activity. This chain is Regulatory protein RecX, found in Lacticaseibacillus casei (strain BL23) (Lactobacillus casei).